We begin with the raw amino-acid sequence, 37 residues long: QFTDVDCSVSKECWSVCKDLFGVDRGKCMGKKCRCYQ.

Gln1 bears the Pyrrolidone carboxylic acid mark. Cystine bridges form between Cys7/Cys28, Cys13/Cys33, and Cys17/Cys35. An interaction with Ca(2+)-activated K(+) channels region spans residues 26–33 (GKCMGKKC).

The protein belongs to the short scorpion toxin superfamily. Potassium channel inhibitor family. Alpha-KTx 01 subfamily. As to expression, expressed by the venom gland.

The protein localises to the secreted. Its function is as follows. Blocks selectively the high conductance calcium-activated (maxi-K) potassium channels (KCa1.1/KCNMA1). This is Potassium channel toxin alpha-KTx 1.3 from Hottentotta tamulus (Eastern Indian scorpion).